The primary structure comprises 391 residues: Arginine biosynthesis bifunctional protein ArgJ 2 (391 aa).

Substrate contacts are provided by K167 and S180. S180 functions as the Nucleophile in the catalytic mechanism.

This sequence belongs to the ArgJ family. In terms of assembly, heterotetramer of two alpha and two beta chains.

Its subcellular location is the cytoplasm. The catalysed reaction is N(2)-acetyl-L-ornithine + L-glutamate = N-acetyl-L-glutamate + L-ornithine. It catalyses the reaction L-glutamate + acetyl-CoA = N-acetyl-L-glutamate + CoA + H(+). The protein operates within amino-acid biosynthesis; L-arginine biosynthesis; L-ornithine and N-acetyl-L-glutamate from L-glutamate and N(2)-acetyl-L-ornithine (cyclic): step 1/1. It participates in amino-acid biosynthesis; L-arginine biosynthesis; N(2)-acetyl-L-ornithine from L-glutamate: step 1/4. Its function is as follows. Catalyzes two activities which are involved in the cyclic version of arginine biosynthesis: the synthesis of N-acetylglutamate from glutamate and acetyl-CoA as the acetyl donor, and of ornithine by transacetylation between N(2)-acetylornithine and glutamate. This Streptomyces clavuligerus protein is Arginine biosynthesis bifunctional protein ArgJ 2.